The chain runs to 598 residues: NADH-ubiquinone oxidoreductase chain 5 (598 aa).

The next 16 helical transmembrane spans lie at 1–21 (MLEL…IFLF), 28–48 (FAES…ILLM), 81–101 (CFFV…FYYM), 115–135 (GLFL…QLLI), 171–191 (GDIG…DWSF), 193–213 (GLYA…LAAA), 233–253 (TPVS…FLLI), 265–285 (IQLM…ICAL), 293–312 (VVAF…VGAG), 323–343 (MHAF…HGLQ), 362–382 (SVCF…AGFF), 399–421 (WAVG…LLYF), 454–474 (VIAG…CLSL), 480–500 (LAAV…VNLL), 509–529 (IPEL…HKLI), and 576–596 (LIKM…GIMI).

This sequence belongs to the complex I subunit 5 family.

The protein resides in the mitochondrion inner membrane. It catalyses the reaction a ubiquinone + NADH + 5 H(+)(in) = a ubiquinol + NAD(+) + 4 H(+)(out). Functionally, core subunit of the mitochondrial membrane respiratory chain NADH dehydrogenase (Complex I) that is believed to belong to the minimal assembly required for catalysis. Complex I functions in the transfer of electrons from NADH to the respiratory chain. The immediate electron acceptor for the enzyme is believed to be ubiquinone. The protein is NADH-ubiquinone oxidoreductase chain 5 (ND5) of Branchiostoma lanceolatum (Common lancelet).